Reading from the N-terminus, the 384-residue chain is Prokineticin receptor 2 (384 aa).

The Extracellular segment spans residues 1-54 (MAAQNGNTSFTPNFNPPQDHASSLSFNFSYGDYDLPMDEDEDMTKTRTFFAAKI). N-linked (GlcNAc...) asparagine glycosylation is found at N7 and N27. Residues 55 to 75 (VIGIALAGIMLVCGIGNFVFI) traverse the membrane as a helical segment. The Cytoplasmic portion of the chain corresponds to 76 to 89 (AALTRYKKLRNLTN). The chain crosses the membrane as a helical span at residues 90–110 (LLIANLAISDFLVAIICCPFE). At 111-136 (MDYYVVRQLSWEHGHVLCASVNYLRT) the chain is on the extracellular side. A disulfide bridge links C128 with C208. The helical transmembrane segment at 137-157 (VSLYVSTNALLAIAIDRYLAI) threads the bilayer. At 158 to 171 (VHPLKPRMNYQTAS) the chain is on the cytoplasmic side. Residues 172–192 (FLIALVWMVSILIAIPSAYFA) form a helical membrane-spanning segment. The Extracellular segment spans residues 193-223 (TETVLFIVKSQEKIFCGQIWPVDQQLYYKSY). A helical transmembrane segment spans residues 224-244 (FLFIFGVEFVGPVVTMTLCYA). The Cytoplasmic portion of the chain corresponds to 245–273 (RISRELWFKAVPGFQTEQIRKRLRCRRKT). The chain crosses the membrane as a helical span at residues 274–294 (VLVLMCILTAYVLCWAPFYGF). Topologically, residues 295–313 (TIVRDFFPTVFVKEKHYLT) are extracellular. A helical transmembrane segment spans residues 314-334 (AFYVVECIAMSNSMINTVCFV). The Cytoplasmic segment spans residues 335 to 384 (TVKNNTMKYFKKMMLLHWRPSQRGSKSSADLDLRTNGVPTTEEVDCIRLK).

Belongs to the G-protein coupled receptor 1 family. In terms of assembly, homodimer. As to expression, expressed in the ileocecum, thyroid gland, pituitary gland, salivary gland, adrenal gland, testis, ovary and brain.

The protein localises to the cell membrane. In terms of biological role, receptor for prokineticin 2. Exclusively coupled to the G(q) subclass of heteromeric G proteins. Activation leads to mobilization of calcium, stimulation of phosphoinositide turnover and activation of p44/p42 mitogen-activated protein kinase. The polypeptide is Prokineticin receptor 2 (PROKR2) (Homo sapiens (Human)).